Here is a 352-residue protein sequence, read N- to C-terminus: Chorismate synthase (352 aa).

Residue R48 participates in NADP(+) binding. Residues 125–127 (RSS), 238–239 (NA), G278, 293–297 (KPTSS), and R319 each bind FMN.

This sequence belongs to the chorismate synthase family. Homotetramer. Requires FMNH2 as cofactor.

The enzyme catalyses 5-O-(1-carboxyvinyl)-3-phosphoshikimate = chorismate + phosphate. Its pathway is metabolic intermediate biosynthesis; chorismate biosynthesis; chorismate from D-erythrose 4-phosphate and phosphoenolpyruvate: step 7/7. Functionally, catalyzes the anti-1,4-elimination of the C-3 phosphate and the C-6 proR hydrogen from 5-enolpyruvylshikimate-3-phosphate (EPSP) to yield chorismate, which is the branch point compound that serves as the starting substrate for the three terminal pathways of aromatic amino acid biosynthesis. This reaction introduces a second double bond into the aromatic ring system. The sequence is that of Chorismate synthase from Legionella pneumophila (strain Lens).